The chain runs to 205 residues: uncharacterized protein (205 aa).

Residues 1–25 (MSNNNNEAQQPVESTNVESQQNVVQ) show a composition bias toward polar residues. Positions 1–205 (MSNNNNEAQQ…TSDPAQQVEA (205 aa)) are disordered. Positions 32-79 (NENNDNNNNNNNNNNNNNNNNNNNNNNNNSNNNNNSSNNENNENNENN) are enriched in low complexity. A compositionally biased stretch (basic and acidic residues) spans 80–122 (SCEKSEQEKPKEPEEPVQEEKSKEPCDQQKVKENEPAEEKETE). Composition is skewed to low complexity over residues 123-132 (PAAPVEPENP) and 146-162 (QHQQ…NGES). The span at 170 to 185 (SENKKRSIDEAGDIKD) shows a compositional bias: basic and acidic residues. Over residues 194–205 (VETSDPAQQVEA) the composition is skewed to polar residues.

This is an uncharacterized protein from Dictyostelium discoideum (Social amoeba).